A 134-amino-acid polypeptide reads, in one-letter code: Rhoptry antigen protein (134 aa).

Disordered stretches follow at residues 21-82 (MGPL…SNLK) and 96-134 (QLDK…ENEL). Residues 29–38 (KSTSAASTSD) are compositionally biased toward polar residues. Residues 39 to 54 (ELSGSEGPSTESTSTG) are compositionally biased toward low complexity. Over residues 57–69 (GEDKTTDNTYKEM) the composition is skewed to basic and acidic residues. Residues 102-113 (PKKKKSKRKKKR) show a composition bias toward basic residues. Positions 114–126 (DSSSDRILLEESK) are enriched in basic and acidic residues.

In Plasmodium falciparum, this protein is Rhoptry antigen protein.